The sequence spans 70 residues: U2-agatoxin-Ao1r (70 aa).

Positions 1 to 20 (MRSIISLILISAMVFSMIAP) are cleaved as a signal peptide. The propeptide occupies 21–34 (VPEEERLQLSEDER). Intrachain disulfides connect Cys37–Cys53, Cys44–Cys58, and Cys52–Cys68. Position 69 is a leucine amide (Leu69).

This sequence belongs to the neurotoxin 01 (U2-agtx) family. Expressed by the venom gland.

It localises to the secreted. Functionally, insect active toxin causing rapid but reversible paralysis in crickets. No activity shown in mammals. Does not show effect on mammalian voltage-gated calcium channels. This Agelena orientalis (Funnel-web spider) protein is U2-agatoxin-Ao1r.